We begin with the raw amino-acid sequence, 428 residues long: C4-dicarboxylate transport protein (428 aa).

Helical transmembrane passes span 8-28, 44-64, 76-96, 142-162, 184-204, 222-242, 326-346, and 352-372; these read SLYF…HFYP, LIKM…IAGM, VALL…LIIV, IGAF…LFGF, VIFG…FGAM, LIIC…GSIA, IVHQ…AAGV, and IVLA…LALI.

Belongs to the dicarboxylate/amino acid:cation symporter (DAACS) (TC 2.A.23) family.

It localises to the cell inner membrane. Functionally, responsible for the transport of dicarboxylates such as succinate, fumarate, and malate from the periplasm across the membrane. This Shigella dysenteriae serotype 1 (strain Sd197) protein is C4-dicarboxylate transport protein.